The chain runs to 97 residues: Integration host factor subunit alpha (97 aa).

Belongs to the bacterial histone-like protein family. In terms of assembly, heterodimer of an alpha and a beta chain.

In terms of biological role, this protein is one of the two subunits of integration host factor, a specific DNA-binding protein that functions in genetic recombination as well as in transcriptional and translational control. This is Integration host factor subunit alpha from Hydrogenovibrio crunogenus (strain DSM 25203 / XCL-2) (Thiomicrospira crunogena).